A 458-amino-acid chain; its full sequence is Argininosuccinate lyase (458 aa).

Belongs to the lyase 1 family. Argininosuccinate lyase subfamily.

It localises to the cytoplasm. It catalyses the reaction 2-(N(omega)-L-arginino)succinate = fumarate + L-arginine. It participates in amino-acid biosynthesis; L-arginine biosynthesis; L-arginine from L-ornithine and carbamoyl phosphate: step 3/3. This Hydrogenobaculum sp. (strain Y04AAS1) protein is Argininosuccinate lyase.